We begin with the raw amino-acid sequence, 452 residues long: tRNA-2-methylthio-N(6)-dimethylallyladenosine synthase (452 aa).

Residues 16–134 (KRFFISTWGC…LPEYIERVKT (119 aa)) enclose the MTTase N-terminal domain. [4Fe-4S] cluster-binding residues include cysteine 25, cysteine 61, cysteine 95, cysteine 171, cysteine 175, and cysteine 178. The 231-residue stretch at 157-387 (RKSDIKAFVT…VEAVNEIMAR (231 aa)) folds into the Radical SAM core domain. The 63-residue stretch at 390–452 (KEFEGKTVEV…NSFSLTGEII (63 aa)) folds into the TRAM domain.

This sequence belongs to the methylthiotransferase family. MiaB subfamily. Monomer. It depends on [4Fe-4S] cluster as a cofactor.

The protein localises to the cytoplasm. The catalysed reaction is N(6)-dimethylallyladenosine(37) in tRNA + (sulfur carrier)-SH + AH2 + 2 S-adenosyl-L-methionine = 2-methylsulfanyl-N(6)-dimethylallyladenosine(37) in tRNA + (sulfur carrier)-H + 5'-deoxyadenosine + L-methionine + A + S-adenosyl-L-homocysteine + 2 H(+). Catalyzes the methylthiolation of N6-(dimethylallyl)adenosine (i(6)A), leading to the formation of 2-methylthio-N6-(dimethylallyl)adenosine (ms(2)i(6)A) at position 37 in tRNAs that read codons beginning with uridine. The chain is tRNA-2-methylthio-N(6)-dimethylallyladenosine synthase from Clostridium novyi (strain NT).